The sequence spans 367 residues: MSVNRILVINPGSTSTKIGVFDNERPVLEETIRHDEEQIGKYKRIIDQYEFRKETILEVLHSHGINISKLNAVCGRGGLLRPIEGGTYTVNDAMLEDLKNGFSGHHASNLGGILAYEIASGLNIPAFIVDPVVVDEMEPIARISGIAGMERKSIFHALNQKAVARKVAEELNHKYEDLNLLVTHMGGGITVGAHKKGKVIDVNNGLNGEGPFSPERAGTVPVGQLVEMCFSGEYYRDEMIKKLVGQGGLVSLIGTNDAIKVEQMVEKGDPEATLIYKAMAYQVAKEIGGASAVLHGKIDAIVLTGGLAYSKILVDEIKERVDWIADVIVHPGEDELQALAEGALRVLREEEAPKEYIVREKETVARG.

This sequence belongs to the acetokinase family.

The protein localises to the cytoplasm. It catalyses the reaction butanoate + ATP = butanoyl phosphate + ADP. This Bacillus cereus (strain ZK / E33L) protein is Probable butyrate kinase.